Consider the following 413-residue polypeptide: Probable tRNA pseudouridine synthase D (413 aa).

Aspartate 97 functions as the Nucleophile in the catalytic mechanism. Positions 167-370 constitute a TRUD domain; it reads AVPNYYGYQR…YGSYRRARLE (204 aa).

Belongs to the pseudouridine synthase TruD family.

The catalysed reaction is uridine(13) in tRNA = pseudouridine(13) in tRNA. Functionally, could be responsible for synthesis of pseudouridine from uracil-13 in transfer RNAs. This is Probable tRNA pseudouridine synthase D from Pyrobaculum arsenaticum (strain DSM 13514 / JCM 11321 / PZ6).